The primary structure comprises 181 residues: Adenine phosphoribosyltransferase (181 aa).

It belongs to the purine/pyrimidine phosphoribosyltransferase family. Homodimer.

Its subcellular location is the cytoplasm. The enzyme catalyses AMP + diphosphate = 5-phospho-alpha-D-ribose 1-diphosphate + adenine. The protein operates within purine metabolism; AMP biosynthesis via salvage pathway; AMP from adenine: step 1/1. Its function is as follows. Catalyzes a salvage reaction resulting in the formation of AMP, that is energically less costly than de novo synthesis. The sequence is that of Adenine phosphoribosyltransferase from Rhodopseudomonas palustris (strain ATCC BAA-98 / CGA009).